A 540-amino-acid chain; its full sequence is ATP-dependent RNA helicase DBP3 (540 aa).

Residues 1 to 35 (MTVEESKKRKLTDDVAIKQNEKKIKKDKKVKDKKD) are compositionally biased toward basic and acidic residues. Residues 1–89 (MTVEESKKRK…TTEQPSKQVK (89 aa)) form a disordered region. The span at 36–52 (KKDKKDKKDKKEKKEKK) shows a compositional bias: basic residues. 2 stretches are compositionally biased toward basic and acidic residues: residues 53–62 (EKKEKNDKKD) and 68–79 (DKKAEQVDKLSE). The Q motif motif lies at 130–156 (LAFNQISLDKEVQNEIAKFPKPTPIQA). The 174-residue stretch at 159–332 (WPYLLSGKDV…STFMKEPVKV (174 aa)) folds into the Helicase ATP-binding domain. 172-179 (AETGSGKT) contacts ATP. Positions 279–282 (DEAD) match the DEAD box motif. Residues 361 to 510 (KLLDLLKKYQ…PVPEDLIKFG (150 aa)) form the Helicase C-terminal domain.

Belongs to the DEAD box helicase family. DDX5/DBP2 subfamily.

It is found in the nucleus. The protein resides in the nucleolus. The enzyme catalyses ATP + H2O = ADP + phosphate + H(+). ATP-dependent RNA helicase required for 60S ribosomal subunit synthesis. Involved in efficient pre-rRNA processing, predominantly at site A3, which is necessary for the normal formation of 25S and 5.8S rRNAs. The protein is ATP-dependent RNA helicase DBP3 (DBP3) of Candida glabrata (strain ATCC 2001 / BCRC 20586 / JCM 3761 / NBRC 0622 / NRRL Y-65 / CBS 138) (Yeast).